The primary structure comprises 85 residues: Large ribosomal subunit protein uL23 (85 aa).

This sequence belongs to the universal ribosomal protein uL23 family. Part of the 50S ribosomal subunit. Interacts with protein L29 and weakly with protein L39e.

Functionally, binds to a specific region on the 23S rRNA. Located at the polypeptide exit tunnel on the outside of the subunit. This is Large ribosomal subunit protein uL23 from Haloarcula marismortui (strain ATCC 43049 / DSM 3752 / JCM 8966 / VKM B-1809) (Halobacterium marismortui).